Reading from the N-terminus, the 217-residue chain is Large ribosomal subunit protein bL21m (217 aa).

A compositionally biased stretch (low complexity) spans 61-81; it reads PPKVTTATTPEAPAAVPTSTP. The segment at 61-87 is disordered; the sequence is PPKVTTATTPEAPAAVPTSTPFSQQPP.

Belongs to the bacterial ribosomal protein bL21 family. Component of the mitochondrial large ribosomal subunit (mt-LSU). Mature N.crassa 74S mitochondrial ribosomes consist of a small (37S) and a large (54S) subunit. The 37S small subunit contains a 16S ribosomal RNA (16S mt-rRNA) and 32 different proteins. The 54S large subunit contains a 23S rRNA (23S mt-rRNA) and 42 different proteins.

It is found in the mitochondrion. Functionally, component of the mitochondrial ribosome (mitoribosome), a dedicated translation machinery responsible for the synthesis of mitochondrial genome-encoded proteins, including at least some of the essential transmembrane subunits of the mitochondrial respiratory chain. The mitoribosomes are attached to the mitochondrial inner membrane and translation products are cotranslationally integrated into the membrane. This is Large ribosomal subunit protein bL21m (mrpl49) from Neurospora crassa (strain ATCC 24698 / 74-OR23-1A / CBS 708.71 / DSM 1257 / FGSC 987).